The primary structure comprises 427 residues: Serine hydroxymethyltransferase (427 aa).

(6S)-5,6,7,8-tetrahydrofolate-binding positions include Leu-117 and 121–123 (GHL). Residue Lys-226 is modified to N6-(pyridoxal phosphate)lysine.

Belongs to the SHMT family. As to quaternary structure, homodimer. Requires pyridoxal 5'-phosphate as cofactor.

It localises to the cytoplasm. It carries out the reaction (6R)-5,10-methylene-5,6,7,8-tetrahydrofolate + glycine + H2O = (6S)-5,6,7,8-tetrahydrofolate + L-serine. The catalysed reaction is L-threonine = acetaldehyde + glycine. The enzyme catalyses L-allo-threonine = acetaldehyde + glycine. It functions in the pathway one-carbon metabolism; tetrahydrofolate interconversion. Its pathway is amino-acid biosynthesis; glycine biosynthesis; glycine from L-serine: step 1/1. Its primary function is to catalyze the reversible interconversion of serine and glycine with tetrahydrofolate (THF) serving as the one-carbon carrier. This reaction serves as the major source of one-carbon groups required for the biosynthesis of purines, thymidylate, methionine, and other important biomolecules. Also exhibits THF-independent aldolase activity toward beta-hydroxyamino acids, producing glycine and aldehydes, via a retro-aldol mechanism. Thus, is able to catalyze the cleavage of L-threonine, L-allo-threonine, L-threo-beta-phenylserine and L-erythro-beta-phenylserine. This second activity is likely to be physiological in H.thermophilus, which is an organism that lacks the ortholog gene for the 'real' threonine aldolase characterized in mesophilic bacteria (LtaE), yeast and plants. The sequence is that of Serine hydroxymethyltransferase from Hydrogenobacter thermophilus (strain DSM 6534 / IAM 12695 / TK-6).